Here is a 100-residue protein sequence, read N- to C-terminus: MHLTLEFGGGLELLLEKSTKVHKVDLQPNDGDGKVVMKGLLAWVKSNLIKERPEMFLKGDSVRPGVLVLINDCDWELCGGLDAELEEKDVVVFISTLHGG.

Residue glycine 100 is modified to 1-thioglycine. Glycine 100 is covalently cross-linked (Glycyl lysine isopeptide (Gly-Lys) (interchain with K-? in acceptor proteins)).

Belongs to the URM1 family. C-terminal thiocarboxylation occurs in 2 steps, it is first acyl-adenylated (-COAMP) via the hesA/moeB/thiF part of the MOCS3 homolog, then thiocarboxylated (-COSH) via the rhodanese domain of the MOCS3 homolog.

It is found in the cytoplasm. Its pathway is tRNA modification; 5-methoxycarbonylmethyl-2-thiouridine-tRNA biosynthesis. In terms of biological role, acts as a sulfur carrier required for 2-thiolation of mcm(5)S(2)U at tRNA wobble positions of cytosolic tRNA(Lys), tRNA(Glu) and tRNA(Gln). Serves as sulfur donor in tRNA 2-thiolation reaction by being thiocarboxylated (-COSH) at its C-terminus by MOCS3. The sulfur is then transferred to tRNA to form 2-thiolation of mcm(5)S(2)U. Also acts as a ubiquitin-like protein (UBL) that is covalently conjugated via an isopeptide bond to lysine residues of target proteins. The thiocarboxylated form serves as substrate for conjugation and oxidative stress specifically induces the formation of UBL-protein conjugates. The protein is Ubiquitin-related modifier 1 homolog of Oryza sativa subsp. japonica (Rice).